We begin with the raw amino-acid sequence, 226 residues long: MAANELASSSVQAFQEQSLGGFVSRKLLLHNPFDHNTQRAFAVAPSPLITHENNLSGNVLMLLSVLICGIICCLGLHYIIRCAFRRTSSFMISEPIAGLSTPCGSSNKGINKKALRMFPVVSYSPEMNLPGLGEECVICLSDFVSGEQIRMLPKCHHGFHVRCIDKWLQQHLTCPKCRHCLVETCQKILGDFSQADQVAATPTASVIVRIAPLEPEGRVNILRESS.

Residues 60–80 (LMLLSVLICGIICCLGLHYII) form a helical membrane-spanning segment. The RING-type; atypical zinc finger occupies 136–178 (CVICLSDFVSGEQIRMLPKCHHGFHVRCIDKWLQQHLTCPKCR).

The protein belongs to the RING-type zinc finger family. ATL subfamily.

Its subcellular location is the membrane. The catalysed reaction is S-ubiquitinyl-[E2 ubiquitin-conjugating enzyme]-L-cysteine + [acceptor protein]-L-lysine = [E2 ubiquitin-conjugating enzyme]-L-cysteine + N(6)-ubiquitinyl-[acceptor protein]-L-lysine.. It participates in protein modification; protein ubiquitination. The chain is RING-H2 finger protein ATL75 (ATL75) from Arabidopsis thaliana (Mouse-ear cress).